Reading from the N-terminus, the 3640-residue chain is Serine/threonine-protein kinase SMG1 (3640 aa).

Over residues 21–34 (NDWQPRSDSLSASQ) the composition is skewed to polar residues. Residues 21–41 (NDWQPRSDSLSASQDGVKCSV) form a disordered region. Residues 1495–1843 (YCHSGKCELA…LYPAIVGSIS (349 aa)) enclose the FAT domain. Residues 1794–1829 (APWRGIIPQLFSRLNHPEAYIRQSICSLLCRVAQDS) form an HEAT repeat. Residues 1870 to 1890 (GLCGGESETGSGPTSQESSRG) form a disordered region. The segment covering 1874 to 1887 (GESETGSGPTSQES) has biased composition (low complexity). Residues 2102–2441 (VGNTITILPT…MERDITRSLF (340 aa)) form the PI3K/PI4K catalytic domain. A G-loop region spans residues 2108–2114 (ILPTKTK). The catalytic loop stretch occupies residues 2310–2318 (GLGDRHLDN). Residues 2330 to 2354 (HIDYNVCFEKGKSLRVPEKVPFRMT) are activation loop. An FATC domain is found at 3608–3640 (RRMSVTEQVDYVIKEATNVDNLAQLYEGWTAWV).

This sequence belongs to the PI3/PI4-kinase family. Requires Mn(2+) as cofactor. In terms of processing, autophosphorylated.

It is found in the nucleus. Its subcellular location is the cytoplasm. The catalysed reaction is L-seryl-[protein] + ATP = O-phospho-L-seryl-[protein] + ADP + H(+). It catalyses the reaction L-threonyl-[protein] + ATP = O-phospho-L-threonyl-[protein] + ADP + H(+). Its function is as follows. Serine/threonine protein kinase involved in both mRNA surveillance and genotoxic stress response pathways. Recognizes the substrate consensus sequence [ST]-Q. Plays a central role in nonsense-mediated decay (NMD) of mRNAs containing premature stop codons by phosphorylating UPF1/RENT1. This Danio rerio (Zebrafish) protein is Serine/threonine-protein kinase SMG1.